Consider the following 78-residue polypeptide: Acyl carrier protein (78 aa).

One can recognise a Carrier domain in the interval 2–77 (SSIEERVKKI…LAINYINENL (76 aa)). The residue at position 37 (Ser-37) is an O-(pantetheine 4'-phosphoryl)serine.

Belongs to the acyl carrier protein (ACP) family. Post-translationally, 4'-phosphopantetheine is transferred from CoA to a specific serine of apo-ACP by AcpS. This modification is essential for activity because fatty acids are bound in thioester linkage to the sulfhydryl of the prosthetic group.

Its subcellular location is the cytoplasm. It participates in lipid metabolism; fatty acid biosynthesis. Its function is as follows. Carrier of the growing fatty acid chain in fatty acid biosynthesis. This chain is Acyl carrier protein, found in Saccharophagus degradans (strain 2-40 / ATCC 43961 / DSM 17024).